Reading from the N-terminus, the 327-residue chain is S-adenosylmethionine/S-adenosylhomocysteine transporter (327 aa).

10 helical membrane passes run 22–42 (CDMA…SFAL), 53–73 (LFVT…LLLC), 85–105 (IMPI…LEFI), 114–134 (TACF…YVQL), 143–163 (LGGL…GGSE), 165–185 (VAEW…ATCL), 202–222 (SLSM…LSLI), 240–260 (LFLQ…YNLF), 271–291 (FLSF…WLLL), and 294–314 (SFPP…RLIY). Residues 34–157 (FIWSSSFALS…LGLVSYLVYL (124 aa)) form the EamA 1 domain. The region spanning 189–313 (GWTLLRKLGR…GFMVLGCRLI (125 aa)) is the EamA 2 domain.

This sequence belongs to the drug/metabolite transporter (DMT) superfamily. 10 TMS drug/metabolite exporter (DME) (TC 2.A.7.3) family.

Its subcellular location is the cell membrane. With respect to regulation, CCCP treatment reduces SAM intracellular uptake by 50%. Functionally, transports S-adenosylmethionine (SAM) and S-adenosylhomocysteine (SAH). Allows bacteria to acquire SAM from the eukaryotic host cell and to likely remove the toxic by-product SAH. The sequence is that of S-adenosylmethionine/S-adenosylhomocysteine transporter from Chlamydia trachomatis serovar L2 (strain ATCC VR-902B / DSM 19102 / 434/Bu).